The primary structure comprises 872 residues: MSELTPMMRQYLEIKADHPDSILFFRLGDFYEMFLDDAVKASRILDITLTSRGKGGDGADVPLCGVPYHSAAPYIAKLIEAGEKVAICEQVEDPKTTKGIVKRQVVKVVTPGLVVESESLSPKENNFLLSLFDGNNGRWGVAYLDISTGEFRLTEVEGHDAAWGEVACANPREILVPASFRENMRGEGRGDLAAGRTFTYVDDWVYDRDYTERLIKNHFGVASPGALGCDGYAEGLQAAAAVLHYLQETQKGRVDHIRELRAYRTQEFLVLDEATRRNLELTATLSEGKRRGSLLGLLDRTATAMGGRKLRQWINYPLVIVEKIKERQDAVGELANDPALRAGIREALEGVYDLERLNGRISLASSGAKDLVALKASLQRIPPLLSLLESTGTALLGELCKGIDPMDEVAELIGRGIVDDPPFVLREGGIIADGYHAELDELRAISREGKGFIARLEAKEKARTGITSLKIRYNKVFGYYIEVTKTNLGSIPEDYIRRQTLANAERFITPELKEYEEKVLGAEERIVELEYSLFQQIRQSVAAEGERLARTADRLATLDVLASLADVAHERNYCRPGIDDGDTLSISEGRHPVVEALNVSERFVPNDVLLDNGENQLVIITGPNMAGKSTFMRQVALIVLMAQLGSFVPATEARIGVVDRIFTRVGASDNLARGQSTFMVEMMETAAILRNATPKSLVVLDEIGRGTSTFDGVSIAWAVAEYLHDTARCAAKTLFATHYHELTELAVTRGKIKNCNVAVKEWNDQVIFLRKIVEGGASHSYGIQVARLAGLPIEVIERAKEILHNLEKGEYVEGGVPRISRGKRAAAPKSSPQLSLFEQGDDLLRQRLTGLNIAALTPLEALNILDELKRMV.

622–629 is an ATP binding site; it reads GPNMAGKS.

This sequence belongs to the DNA mismatch repair MutS family.

This protein is involved in the repair of mismatches in DNA. It is possible that it carries out the mismatch recognition step. This protein has a weak ATPase activity. This Geobacter metallireducens (strain ATCC 53774 / DSM 7210 / GS-15) protein is DNA mismatch repair protein MutS.